Consider the following 1025-residue polypeptide: Probable outer membrane protein PmpF (1025 aa).

The signal sequence occupies residues 1–20 (MTRRILPLSLVFIPLSCISA). The interval 654-681 (NSTETQTANNSIQEQKNTSETFDSNSTT) is disordered. Residues 659-681 (QTANNSIQEQKNTSETFDSNSTT) are compositionally biased toward polar residues. Positions 748 to 1025 (LLPDDSWFAL…YMNAGGALVF (278 aa)) constitute an Autotransporter domain.

The protein belongs to the PMP outer membrane protein family.

The protein resides in the secreted. Its subcellular location is the cell wall. The protein localises to the cell outer membrane. The protein is Probable outer membrane protein PmpF (pmpF) of Chlamydia muridarum (strain MoPn / Nigg).